Consider the following 494-residue polypeptide: Histidine--tRNA ligase (494 aa).

The interval 1–20 (MAKDQKKQPRPKAETPKGFR) is disordered.

The protein belongs to the class-II aminoacyl-tRNA synthetase family. In terms of assembly, homodimer.

The protein localises to the cytoplasm. The enzyme catalyses tRNA(His) + L-histidine + ATP = L-histidyl-tRNA(His) + AMP + diphosphate + H(+). The polypeptide is Histidine--tRNA ligase (Paracoccus denitrificans (strain Pd 1222)).